Consider the following 100-residue polypeptide: MLSTRFVTLAILACLLVVLGLARGAGGDPGVKQRIDVAREEERRDFWHAACSGHGFPITTPSTAAILFYVSLLAVGVAVACQAYRAVLRIVTLEMLQHLH.

A signal peptide spans 1-27 (MLSTRFVTLAILACLLVVLGLARGAGG). At 28 to 63 (DPGVKQRIDVAREEERRDFWHAACSGHGFPITTPST) the chain is on the virion surface side. The helical transmembrane segment at 64-84 (AAILFYVSLLAVGVAVACQAY) threads the bilayer. Residues 85 to 100 (RAVLRIVTLEMLQHLH) lie on the Intravirion side of the membrane.

It belongs to the herpesviridae glycoprotein N family. In terms of assembly, interacts (via N-terminus) with gM (via N-terminus). The gM-gN heterodimer forms the gCII complex.

It is found in the virion membrane. Its subcellular location is the host membrane. The protein resides in the host Golgi apparatus. It localises to the host trans-Golgi network. Envelope glycoprotein necessary for proper maturation of gM and modulation of its membrane fusion activity. Also plays a critical role in virion morphogenesis. In Equus caballus (Horse), this protein is Envelope glycoprotein N.